Reading from the N-terminus, the 655-residue chain is MGRRRAPGGGSLGRVLIRHQTQRSRSHRHTDSWLHTSELNDGYDWGRLNLQSVTEQSSLEDFLATAELAGTEFVAEKLNIKFVPPEARTGLLSFEESQRIKRLHEENRQFLCIPRRPNWDRKTSPEELKQAEKDNFLKWRRQLVRLEEEQKLILTPFERNLDFWRQLWRVIERSDIVVQIVDARNPLLFRCEDLECYVKEIDAAKENVILINKADLLTAEQRVAWAVHFEKEGVKVIFWSALAETVHLNGDSKDEVNSVAGEANSSESEDSSLDGNEIPHRDLFLLSEESESDDDDSEYEDCQEDEEEDWQTCSEEDSNPEEGQEEGGCDRDQKEHGPEDSEAQSRASPENSQMSNKSHLVSKQELLELFKKLHTGKKVKDGQLTVGLVGYPNVGKSSTINTIMGNKKVSVSATPGHTKHFQTLYVEPGLCLCDCPGLVMPSFVSTKAEMICSGILPIDQMRDHVPPVSLVCQNIPRRVLEATYGINIIKPGEDEDPYRPPTSEELLTAYGCMRGFMTAHGQPDQPRSARYILKDYVRGKLLYCHPPPGKDPVAFQHQHRQLLENKIKGEELRLQPGKTQKAKQVENVVDKTFFHQENVRALTKGVQAVMGYKPGSGLVTAAAASAENVPGKPWKKHGNRNKKEKSRRLYRHLDV.

The interval 1–31 (MGRRRAPGGGSLGRVLIRHQTQRSRSHRHTD) is disordered. Over residues 16 to 28 (LIRHQTQRSRSHR) the composition is skewed to basic residues. 2 positions are modified to phosphoserine: Ser93 and Ser97. The CP-type G domain occupies 164–441 (WRQLWRVIER…LCDCPGLVMP (278 aa)). 212-215 (NKAD) is a GTP binding site. Ser252 carries the post-translational modification Phosphoserine. The segment at 253 to 359 (KDEVNSVAGE…ENSQMSNKSH (107 aa)) is disordered. Acidic residues predominate over residues 288 to 327 (EESESDDDDSEYEDCQEDEEEDWQTCSEEDSNPEEGQEEG). Over residues 328–339 (GCDRDQKEHGPE) the composition is skewed to basic and acidic residues. Polar residues predominate over residues 344–359 (QSRASPENSQMSNKSH). GTP contacts are provided by residues 390-397 (GYPNVGKS) and 434-437 (DCPG). Residues 625-655 (SAENVPGKPWKKHGNRNKKEKSRRLYRHLDV) form a disordered region. Over residues 633 to 655 (PWKKHGNRNKKEKSRRLYRHLDV) the composition is skewed to basic residues.

This sequence belongs to the TRAFAC class YlqF/YawG GTPase family. LSG1 subfamily.

The protein localises to the cytoplasm. Its subcellular location is the endoplasmic reticulum. It localises to the nucleus. The protein resides in the cajal body. It catalyses the reaction GTP + H2O = GDP + phosphate + H(+). Its function is as follows. Functions as a GTPase. May act by mediating the release of NMD3 from the 60S ribosomal subunit after export into the cytoplasm during the 60S ribosomal subunit maturation. The protein is Large subunit GTPase 1 homolog of Rattus norvegicus (Rat).